The sequence spans 1196 residues: Nucleolar protein 6 (1196 aa).

Disordered regions lie at residues 1–75 and 1140–1196; these read MPGK…VKPP and KREQ…KALK. Positions 22-31 are enriched in basic and acidic residues; that stretch reads HAEDHSDLEH. Residues 1165–1174 show a composition bias toward basic residues; sequence KPKKHRKRKG.

This sequence belongs to the NRAP family. Part of the small subunit (SSU) processome, composed of more than 70 proteins and the RNA chaperone small nucleolar RNA (snoRNA) U3.

It localises to the nucleus. The protein resides in the nucleolus. It is found in the chromosome. Its function is as follows. Part of the small subunit (SSU) processome, first precursor of the small eukaryotic ribosomal subunit. During the assembly of the SSU processome in the nucleolus, many ribosome biogenesis factors, an RNA chaperone and ribosomal proteins associate with the nascent pre-rRNA and work in concert to generate RNA folding, modifications, rearrangements and cleavage as well as targeted degradation of pre-ribosomal RNA by the RNA exosome. The polypeptide is Nucleolar protein 6 (Drosophila sechellia (Fruit fly)).